The following is a 464-amino-acid chain: Arabinose-proton symporter (464 aa).

12 helical membrane-spanning segments follow: residues 21-43, 63-85, 92-111, 116-138, 150-172, 185-207, 266-288, 303-325, 332-354, 364-386, 398-420, and 424-446; these read GFVILISCAAGLGGLLYGYDTAV, GLVISSIMIGGVVGVGISGFLSD, ILMTAALLFAISAIVSALSQ, LIIARIIGGLGIGMGSSLSVTYI, LSSLYQLFTILGISATYFINLAV, GWRWMLAYGMVPSVIFFLVLLVV, ALVIGILLALFNQVIGMNAITYY, GFVTTCIVGVVEVIFTVIAVLLI, KLMSIGSAFMAIFMILIGTSFYF, VLILGFVAAFCVSVGPITWIMIS, AGIATIFLWGANWAIGQFVPMMI, and GLAYTFWIFAVINILCFLFVVTI.

Belongs to the major facilitator superfamily. Sugar transporter (TC 2.A.1.1) family.

The protein resides in the cell membrane. It catalyses the reaction L-arabinose(in) + H(+)(in) = L-arabinose(out) + H(+)(out). The catalysed reaction is D-galactose(in) + H(+)(in) = D-galactose(out) + H(+)(out). It carries out the reaction D-xylose(in) + H(+)(in) = D-xylose(out) + H(+)(out). Functionally, uptake of L-arabinose across the cytoplasmic membrane with the concomitant transport of protons into the cell (symport system). In the presence of inducing amounts of L-arabinose, can import both D-galactose and D-xylose. Can also transport the disaccharide alpha-1,5-arabinobiose. The chain is Arabinose-proton symporter (araE) from Bacillus subtilis (strain 168).